A 221-amino-acid polypeptide reads, in one-letter code: GDP-perosamine N-acetyltransferase (221 aa).

Catalysis depends on His139, which acts as the Proton acceptor.

It belongs to the transferase hexapeptide repeat family. As to quaternary structure, homotrimer.

It catalyses the reaction GDP-alpha-D-perosamine + acetyl-CoA = GDP-N-acetyl-alpha-D-perosamine + CoA + H(+). It participates in bacterial outer membrane biogenesis; LPS O-antigen biosynthesis. Functionally, catalyzes the transfer of an acetyl residue from acetyl-CoA onto GDP-perosamine to form GDP-N-acetyl-perosamine. This chain is GDP-perosamine N-acetyltransferase, found in Escherichia coli O157:H7.